Consider the following 196-residue polypeptide: Mediator of RNA polymerase II transcription subunit 21 (196 aa).

Positions lysine 52–proline 111 are disordered. Composition is skewed to low complexity over residues serine 65–alanine 76 and glutamine 87–glutamine 98. The stretch at serine 144–leucine 174 forms a coiled coil.

This sequence belongs to the Mediator complex subunit 21 family. In terms of assembly, component of the Mediator complex.

The protein resides in the nucleus. Component of the Mediator complex, a coactivator involved in the regulated transcription of nearly all RNA polymerase II-dependent genes. Mediator functions as a bridge to convey information from gene-specific regulatory proteins to the basal RNA polymerase II transcription machinery. Mediator is recruited to promoters by direct interactions with regulatory proteins and serves as a scaffold for the assembly of a functional preinitiation complex with RNA polymerase II and the general transcription factors. This chain is Mediator of RNA polymerase II transcription subunit 21 (srb7), found in Aspergillus niger (strain ATCC MYA-4892 / CBS 513.88 / FGSC A1513).